Reading from the N-terminus, the 115-residue chain is NAD(P)H-quinone oxidoreductase subunit M (115 aa).

The protein belongs to the complex I NdhM subunit family. NDH-1 can be composed of about 15 different subunits; different subcomplexes with different compositions have been identified which probably have different functions.

Its subcellular location is the cellular thylakoid membrane. It catalyses the reaction a plastoquinone + NADH + (n+1) H(+)(in) = a plastoquinol + NAD(+) + n H(+)(out). The enzyme catalyses a plastoquinone + NADPH + (n+1) H(+)(in) = a plastoquinol + NADP(+) + n H(+)(out). Its function is as follows. NDH-1 shuttles electrons from an unknown electron donor, via FMN and iron-sulfur (Fe-S) centers, to quinones in the respiratory and/or the photosynthetic chain. The immediate electron acceptor for the enzyme in this species is believed to be plastoquinone. Couples the redox reaction to proton translocation, and thus conserves the redox energy in a proton gradient. Cyanobacterial NDH-1 also plays a role in inorganic carbon-concentration. The protein is NAD(P)H-quinone oxidoreductase subunit M of Prochlorococcus marinus (strain MIT 9215).